Reading from the N-terminus, the 511-residue chain is uncharacterized protein (511 aa).

The CoA carboxyltransferase N-terminal domain maps to 2–254 (LMDYEKERTE…NFQEKAPIHE (253 aa)). Residues 2–506 (LMDYEKERTE…KEMTFTNRKH (505 aa)) are carboxyltransferase. The 247-residue stretch at 260 to 506 (HFETPLADVI…KEMTFTNRKH (247 aa)) folds into the CoA carboxyltransferase C-terminal domain.

Belongs to the AccD/PCCB family.

This is an uncharacterized protein from Bacillus subtilis (strain 168).